Consider the following 91-residue polypeptide: C-C motif chemokine 5 (91 aa).

Positions 1 to 23 (MKVFAAALAVILATATFCTPASA) are cleaved as a signal peptide. 2 disulfide bridges follow: cysteine 33–cysteine 57 and cysteine 34–cysteine 73.

This sequence belongs to the intercrine beta (chemokine CC) family.

It localises to the secreted. In terms of biological role, chemoattractant for blood monocytes, memory T-helper cells and eosinophils. Causes the release of histamine from basophils and activates eosinophils. May activate several chemokine receptors including CCR1, CCR3, CCR4 and CCR5. May also be an agonist of the G protein-coupled receptor GPR75. Together with GPR75, may play a role in neuron survival through activation of a downstream signaling pathway involving the PI3, Akt and MAP kinases. By activating GPR75 may also play a role in insulin secretion by islet cells. This chain is C-C motif chemokine 5 (CCL5), found in Equus caballus (Horse).